A 62-amino-acid polypeptide reads, in one-letter code: UPF0434 protein R03186 (62 aa).

It belongs to the UPF0434 family.

In Rhizobium meliloti (strain 1021) (Ensifer meliloti), this protein is UPF0434 protein R03186.